A 247-amino-acid polypeptide reads, in one-letter code: Uracil-DNA glycosylase (247 aa).

Residue Asp-83 is the Proton acceptor of the active site.

Belongs to the uracil-DNA glycosylase (UDG) superfamily. UNG family.

The protein resides in the cytoplasm. The catalysed reaction is Hydrolyzes single-stranded DNA or mismatched double-stranded DNA and polynucleotides, releasing free uracil.. Excises uracil residues from the DNA which can arise as a result of misincorporation of dUMP residues by DNA polymerase or due to deamination of cytosine. This is Uracil-DNA glycosylase from Deinococcus radiodurans (strain ATCC 13939 / DSM 20539 / JCM 16871 / CCUG 27074 / LMG 4051 / NBRC 15346 / NCIMB 9279 / VKM B-1422 / R1).